Here is an 898-residue protein sequence, read N- to C-terminus: Vacuolar membrane protease (898 aa).

The Cytoplasmic segment spans residues 1-14 (MGIVDYLVAAVSFR). The helical transmembrane segment at 15–35 (TLPTTFVAVLVYLAIFISVLI) threads the bilayer. The Vacuolar segment spans residues 36-342 (TDELPATPKD…LFGQALIVFP (307 aa)). N-linked (GlcNAc...) asparagine glycans are attached at residues Asn-50, Asn-103, and Asn-110. Residues His-139 and Asp-151 each contribute to the Zn(2+) site. Glu-183 (proton acceptor) is an active-site residue. Glu-184 lines the Zn(2+) pocket. A glycan (N-linked (GlcNAc...) asparagine) is linked at Asn-200. 2 residues coordinate Zn(2+): Glu-209 and His-284. A helical transmembrane segment spans residues 343 to 365 (LSAMITFNIVFLVVGPIMLALLV). Residues 366-411 (TFDIVARHRRQEMIGGGYEEQGFFARAWTSFKSFRWVGGFWKHAKF) lie on the Cytoplasmic side of the membrane. Residues 412–432 (WVALAVTVGLQVLLCVGYLYI) form a helical membrane-spanning segment. Position 433 (Asn-433) is a topological domain, vacuolar. A helical transmembrane segment spans residues 434–454 (PLIAYSSSHIVLLSFLSLAYL). Residues 455 to 479 (STYLVHNIPSPTDTYGSHLPEQQKQ) are Cytoplasmic-facing. The helical transmembrane segment at 480–500 (AALFQLYFFTWILLLAATVVG) threads the bilayer. Residues 501 to 509 (AKLSVGSFY) lie on the Vacuolar side of the membrane. Residues 510-530 (ILSLWNAVLFAACAIGSIAGL) form a helical membrane-spanning segment. Residues 531-593 (LSSHTVEGDA…PGGKEGEEVS (63 aa)) are Cytoplasmic-facing. A helical transmembrane segment spans residues 594–614 (GAIGWWFVQFVLSVPAVVILV). The Vacuolar segment spans residues 615-635 (SQLALLMLAATEQTLADGSPA). The chain crosses the membrane as a helical span at residues 636 to 656 (VTVYGGASLMSVLAILPLAPF). At 657 to 664 (ACKLHRRV) the chain is on the cytoplasmic side. The chain crosses the membrane as a helical span at residues 665 to 685 (AYVALVVLIASTAYAWLVFPF). Topologically, residues 686-898 (SERAPLKVFF…LVEGYKAFAV (213 aa)) are vacuolar. N-linked (GlcNAc...) asparagine glycans are attached at residues Asn-704, Asn-733, and Asn-764.

Belongs to the peptidase M28 family. Zn(2+) is required as a cofactor.

It is found in the vacuole membrane. In terms of biological role, may be involved in vacuolar sorting and osmoregulation. The polypeptide is Vacuolar membrane protease (Schizophyllum commune (strain H4-8 / FGSC 9210) (Split gill fungus)).